A 229-amino-acid chain; its full sequence is uncharacterized protein (229 aa).

Residue 22-29 (GMIAFGKT) participates in ATP binding.

This is an uncharacterized protein from Mycoplasma pneumoniae (strain ATCC 29342 / M129 / Subtype 1) (Mycoplasmoides pneumoniae).